A 75-amino-acid polypeptide reads, in one-letter code: Small ribosomal subunit protein bS21 (75 aa).

It belongs to the bacterial ribosomal protein bS21 family.

The polypeptide is Small ribosomal subunit protein bS21 (Brucella abortus (strain S19)).